A 3391-amino-acid polypeptide reads, in one-letter code: Genome polyprotein (3391 aa).

The tract at residues 1-15 (MNNQRKKTARPSFNM) is interaction with host EXOC1. Residues 1–101 (MNNQRKKTAR…LNIMNRRKRS (101 aa)) are Cytoplasmic-facing. The interval 37-72 (LLSGQGPMKLVMAFIAFLRFLAIPPTAGILARWGSF) is hydrophobic; homodimerization of capsid protein C. Residues 101 to 114 (SVTMLLMLLPTALA) constitute a propeptide, ER anchor for the capsid protein C, removed in mature form by serine protease NS3. The helical transmembrane segment at 102 to 119 (VTMLLMLLPTALAFHLTT) threads the bilayer. Residues 120–242 (RGGEPHMIVS…QIQRVETWAL (123 aa)) are Extracellular-facing. N-linked (GlcNAc...) asparagine; by host glycosylation is present at Asn-183. Residues 243 to 260 (RHPGFTVIALFLAHAIGT) form a helical membrane-spanning segment. Position 261 (Ser-261) is a topological domain, cytoplasmic. The helical transmembrane segment at 262-280 (ITQKGIIFILLMLVTPSMA) threads the bilayer. The Extracellular portion of the chain corresponds to 281-725 (MRCVGIGSRD…HQVFGTAYGV (445 aa)). Intrachain disulfides connect Cys-283/Cys-310, Cys-340/Cys-401, Cys-354/Cys-385, and Cys-372/Cys-396. Asn-347 carries N-linked (GlcNAc...) asparagine; by host glycosylation. Residues 378 to 391 (DRGWGNGCGLFGKG) are fusion peptide. Residue Asn-433 is glycosylated (N-linked (GlcNAc...) asparagine; by host). 2 disulfide bridges follow: Cys-465/Cys-565 and Cys-582/Cys-613. Residues 726-746 (LFSGVSWTMKIGIGILLTWLG) traverse the membrane as a helical segment. At 747–752 (LNSRST) the chain is on the cytoplasmic side. Residues 753-773 (SLSMTCIAVGMVTLYLGVMVQ) traverse the membrane as a helical segment. At 774-1198 (ADSGCVINWK…NASDRMGMGT (425 aa)) the chain is on the extracellular side. Disulfide bonds link Cys-778/Cys-789, Cys-829/Cys-917, Cys-953/Cys-997, Cys-1054/Cys-1103, Cys-1065/Cys-1087, and Cys-1086/Cys-1090. N-linked (GlcNAc...) asparagine; by host glycans are attached at residues Asn-904 and Asn-981. Asn-1189 carries N-linked (GlcNAc...) asparagine; by host glycosylation. A helical transmembrane segment spans residues 1199–1219 (TYLALMATFKMRPMFAVGLLF). Topologically, residues 1220–1225 (RRLTSR) are cytoplasmic. The helical transmembrane segment at 1226–1244 (EVLLLTIGLSLVASVELPN) threads the bilayer. The Lumenal portion of the chain corresponds to 1245 to 1268 (SLEELGDGLAMGIMILKLLTDFQS). A helical transmembrane segment spans residues 1269–1289 (HQLWATLLSLTFVKTTFSLHY). Position 1290 (Ala-1290) is a topological domain, cytoplasmic. The chain crosses the membrane as a helical span at residues 1291 to 1309 (WKTMAMVLSIVSLFPLCLS). At 1310–1314 (TTSQK) the chain is on the lumenal side. The chain crosses the membrane as a helical span at residues 1315-1335 (TTWLPVLLGSLGCKPLTMFLI). Topologically, residues 1336-1345 (AENKIWGRKS) are cytoplasmic. Residues 1346-1366 (WPLNEGIMAVGIVSILLSSLL) form a helical membrane-spanning segment. Residues 1367-1369 (KND) lie on the Lumenal side of the membrane. Residues 1370–1390 (VPLAGPLIAGGMLIACYVISG) traverse the membrane as a helical segment. Residues 1391-1446 (SSADLSLEKAAEVSWEEEAEHSGASHNILVEVQDDGTMKIKDEERDDTLTILLKAT) are Cytoplasmic-facing. The segment at 1397–1436 (LEKAAEVSWEEEAEHSGASHNILVEVQDDGTMKIKDEERD) is interacts with and activates NS3 protease. The segment at residues 1447-1467 (LLAVSGVYPLSIPATLFVWYF) is an intramembrane region (helical). The Cytoplasmic portion of the chain corresponds to 1468–2147 (WQKKKQRSGV…MEELPDTIET (680 aa)). The Peptidase S7 domain maps to 1475–1652 (SGVLWDTPSP…KASQEGPLPE (178 aa)). Residues His-1525, Asp-1549, and Ser-1609 each act as charge relay system; for serine protease NS3 activity in the active site. Residues 1655-1811 (DEVFRKRNLT…QSNAVIQDEE (157 aa)) form the Helicase ATP-binding domain. Residues 1659–1662 (RKRN) form an important for RNA-binding region. An ATP-binding site is contributed by 1668–1675 (LHPGSGKT). The short motif at 1759–1762 (DEAH) is the DEAH box element. Residues 1821-1988 (SGYEWITDFP…IIPALFEPER (168 aa)) form the Helicase C-terminal domain. Lys-1863 is modified (N6-acetyllysine; by host). The helical transmembrane segment at 2148-2168 (LMLLALIAVLTGGVTLFFLSG) threads the bilayer. Residues 2169–2170 (KG) lie on the Lumenal side of the membrane. The segment at residues 2171 to 2191 (LGKTSIGLLCVMASSVLLWMA) is an intramembrane region (helical). Ser-2192 is a topological domain (lumenal). The chain crosses the membrane as a helical span at residues 2193-2213 (VEPHWIAASIILEFFLMVLLI). Over 2214-2228 (PEPDRQRTPQDNQLA) the chain is Cytoplasmic. A helical membrane pass occupies residues 2229-2249 (YVVIGLLFMILTVAANEMGLL). At 2250–2275 (ETTKKDLGIGHVAAENHHHATMLDVD) the chain is on the lumenal side. An intramembrane region (helical) is located at residues 2276–2296 (LRPASAWTLYAVATTVITPMM). At 2297–2348 (RHTIENTTANISLTAIANQAAILMGLDKGWPISKMDIGVPLLALGCYSQVNP) the chain is on the lumenal side. Residues Asn-2302 and Asn-2306 are each glycosylated (N-linked (GlcNAc...) asparagine; by host). Residues 2349–2369 (LTLTAAVLMLVAHYAIIGPGL) form a helical membrane-spanning segment. At 2370 to 2414 (QAKATREAQKRTAAGIMKNPTVDGIVAIDLDPVVYDAKFEKQLGQ) the chain is on the cytoplasmic side. The chain crosses the membrane as a helical span at residues 2415–2435 (IMLLILCTSQILLMRTTWALC). Residues 2436–2460 (ESITLATGPLTTLWEGSPGKFWNTT) lie on the Lumenal side of the membrane. Asn-2458 is a glycosylation site (N-linked (GlcNAc...) asparagine; by host). Residues 2461-2481 (IAVSMANIFRGSYLAGAGLAF) form a helical membrane-spanning segment. Residues 2482-3391 (SLMKSLGGGR…NESDPEGALW (910 aa)) lie on the Cytoplasmic side of the membrane. The mRNA cap 0-1 NS5-type MT domain occupies 2494–2755 (TGAKGKHWER…DVDLGAGTRH (262 aa)). An S-adenosyl-L-methionine-binding site is contributed by Ser-2548. Position 2548 is a phosphoserine (Ser-2548). Lys-2553 (for 2'-O-MTase activity) is an active-site residue. The SUMO-interacting motif motif lies at 2569–2572 (VIDL). The S-adenosyl-L-methionine site is built by Gly-2578, Trp-2579, Thr-2596, Lys-2597, Asp-2623, and Val-2624. Asp-2638 functions as the For 2'-O-MTase activity in the catalytic mechanism. Ile-2639 provides a ligand contact to S-adenosyl-L-methionine. Catalysis depends on for 2'-O-MTase activity residues Lys-2672 and Glu-2708. Tyr-2710 serves as a coordination point for S-adenosyl-L-methionine. Glu-2929, His-2933, Cys-2938, and Cys-2941 together coordinate Zn(2+). A RdRp catalytic domain is found at 3019 to 3168 (GNMYADDTAG…KPIDDRFATA (150 aa)). 3 residues coordinate Zn(2+): His-3203, Cys-3219, and Cys-3338.

It in the N-terminal section; belongs to the class I-like SAM-binding methyltransferase superfamily. mRNA cap 0-1 NS5-type methyltransferase family. In terms of assembly, homodimer. Interacts (via N-terminus) with host EXOC1 (via C-terminus); this interaction results in EXOC1 degradation through the proteasome degradation pathway. Forms heterodimers with envelope protein E in the endoplasmic reticulum and Golgi. As to quaternary structure, homodimer; in the endoplasmic reticulum and Golgi. Interacts with protein prM. Interacts with non-structural protein 1. In terms of assembly, homodimer; Homohexamer when secreted. Interacts with envelope protein E. Interacts (via N-terminus) with serine protease NS3. As to quaternary structure, forms a heterodimer with serine protease NS3. May form homooligomers. In terms of assembly, forms a heterodimer with NS2B. Interacts with NS4B. Interacts with unphosphorylated RNA-directed RNA polymerase NS5; this interaction stimulates RNA-directed RNA polymerase NS5 guanylyltransferase activity. Interacts with host SHFL. Interacts with host MAVS; this interaction inhibits the synthesis of IFN-beta. Interacts with host SHFL. Interacts with host AUP1; the interaction occurs in the presence of Dengue virus NS4B and induces lipophagy which facilitates production of virus progeny particles. As to quaternary structure, interacts with serine protease NS3. In terms of assembly, homodimer. Interacts with host STAT2; this interaction inhibits the phosphorylation of the latter, and, when all viral proteins are present (polyprotein), targets STAT2 for degradation. Interacts with serine protease NS3. In terms of processing, specific enzymatic cleavages in vivo yield mature proteins. Cleavages in the lumen of endoplasmic reticulum are performed by host signal peptidase, whereas cleavages in the cytoplasmic side are performed by serine protease NS3. Signal cleavage at the 2K-4B site requires a prior NS3 protease-mediated cleavage at the 4A-2K site. Post-translationally, cleaved in post-Golgi vesicles by a host furin, releasing the mature small envelope protein M, and peptide pr. This cleavage is incomplete as up to 30% of viral particles still carry uncleaved prM. N-glycosylated. In terms of processing, N-glycosylated. The excreted form is glycosylated and this is required for efficient secretion of the protein from infected cells. Post-translationally, acetylated by host KAT5. Acetylation modulates NS3 RNA-binding and unwinding activities and plays an important positive role for viral replication. Sumoylation of RNA-directed RNA polymerase NS5 increases NS5 protein stability allowing proper viral RNA replication. In terms of processing, phosphorylated on serines residues. This phosphorylation may trigger NS5 nuclear localization.

It is found in the virion. It localises to the host nucleus. The protein resides in the host cytoplasm. The protein localises to the host perinuclear region. Its subcellular location is the secreted. It is found in the virion membrane. It localises to the host endoplasmic reticulum membrane. The protein resides in the host mitochondrion. It catalyses the reaction Selective hydrolysis of -Xaa-Xaa-|-Yaa- bonds in which each of the Xaa can be either Arg or Lys and Yaa can be either Ser or Ala.. It carries out the reaction RNA(n) + a ribonucleoside 5'-triphosphate = RNA(n+1) + diphosphate. The enzyme catalyses a ribonucleoside 5'-triphosphate + H2O = a ribonucleoside 5'-diphosphate + phosphate + H(+). The catalysed reaction is ATP + H2O = ADP + phosphate + H(+). It catalyses the reaction a 5'-end (5'-triphosphoguanosine)-ribonucleoside in mRNA + S-adenosyl-L-methionine = a 5'-end (N(7)-methyl 5'-triphosphoguanosine)-ribonucleoside in mRNA + S-adenosyl-L-homocysteine. It carries out the reaction a 5'-end (N(7)-methyl 5'-triphosphoguanosine)-ribonucleoside in mRNA + S-adenosyl-L-methionine = a 5'-end (N(7)-methyl 5'-triphosphoguanosine)-(2'-O-methyl-ribonucleoside) in mRNA + S-adenosyl-L-homocysteine + H(+). Plays a role in virus budding by binding to the cell membrane and gathering the viral RNA into a nucleocapsid that forms the core of a mature virus particle. During virus entry, may induce genome penetration into the host cytoplasm after hemifusion induced by the surface proteins. Can migrate to the cell nucleus where it modulates host functions. Overcomes the anti-viral effects of host EXOC1 by sequestering and degrading the latter through the proteasome degradation pathway. Functionally, inhibits RNA silencing by interfering with host Dicer. Its function is as follows. Prevents premature fusion activity of envelope proteins in trans-Golgi by binding to envelope protein E at pH6.0. After virion release in extracellular space, gets dissociated from E dimers. In terms of biological role, acts as a chaperone for envelope protein E during intracellular virion assembly by masking and inactivating envelope protein E fusion peptide. prM is the only viral peptide matured by host furin in the trans-Golgi network probably to avoid catastrophic activation of the viral fusion activity in acidic Golgi compartment prior to virion release. prM-E cleavage is inefficient, and many virions are only partially matured. These uncleaved prM would play a role in immune evasion. May play a role in virus budding. Exerts cytotoxic effects by activating a mitochondrial apoptotic pathway through M ectodomain. May display a viroporin activity. Functionally, binds to host cell surface receptor and mediates fusion between viral and cellular membranes. Envelope protein is synthesized in the endoplasmic reticulum in the form of heterodimer with protein prM. They play a role in virion budding in the ER, and the newly formed immature particle is covered with 60 spikes composed of heterodimer between precursor prM and envelope protein E. The virion is transported to the Golgi apparatus where the low pH causes dissociation of PrM-E heterodimers and formation of E homodimers. prM-E cleavage is inefficient, and many virions are only partially matured. These uncleaved prM would play a role in immune evasion. Its function is as follows. Involved in immune evasion, pathogenesis and viral replication. Once cleaved off the polyprotein, is targeted to three destinations: the viral replication cycle, the plasma membrane and the extracellular compartment. Essential for viral replication. Required for formation of the replication complex and recruitment of other non-structural proteins to the ER-derived membrane structures. Excreted as a hexameric lipoparticle that plays a role against host immune response. Antagonizing the complement function. Binds to the host macrophages and dendritic cells. Inhibits signal transduction originating from Toll-like receptor 3 (TLR3). In terms of biological role, disrupts the host endothelial glycocalyx layer of host pulmonary microvascular endothelial cells, inducing degradation of sialic acid and shedding of heparan sulfate proteoglycans. NS1 induces expression of sialidases, heparanase, and activates cathepsin L, which activates heparanase via enzymatic cleavage. These effects are probably linked to the endothelial hyperpermeability observed in severe dengue disease. Component of the viral RNA replication complex that functions in virion assembly and antagonizes the host immune response. Functionally, required cofactor for the serine protease function of NS3. May have membrane-destabilizing activity and form viroporins. Its function is as follows. Displays three enzymatic activities: serine protease, NTPase and RNA c. NS3 serine protease, in association with NS2B, performs its autocleavage and cleaves the polyprotein at dibasic sites in the cytoplasm: C-prM, NS2A-NS2B, NS2B-NS3, NS3-NS4A, NS4A-2K and NS4B-NS5. NS3 RNA helicase binds RNA and unwinds dsRNA in the 3' to 5' direction. In terms of biological role, regulates the ATPase activity of the NS3 helicase activity. NS4A allows NS3 helicase to conserve energy during unwinding. Plays a role in the inhibition of the host innate immune response. Interacts with host MAVS and thereby prevents the interaction between RIGI and MAVS. In turn, IFN-beta production is impaired. Interacts with host AUP1 which mediates induction of lipophagy in host cells and facilitates production of virus progeny particles. Functions as a signal peptide for NS4B and is required for the interferon antagonism activity of the latter. Functionally, induces the formation of ER-derived membrane vesicles where the viral replication takes place. Inhibits interferon (IFN)-induced host STAT1 phosphorylation and nuclear translocation, thereby preventing the establishment of cellular antiviral state by blocking the IFN-alpha/beta pathway. Its function is as follows. Replicates the viral (+) and (-) RNA genome, and performs the capping of genomes in the cytoplasm. NS5 methylates viral RNA cap at guanine N-7 and ribose 2'-O positions. Besides its role in RNA genome replication, also prevents the establishment of cellular antiviral state by blocking the interferon-alpha/beta (IFN-alpha/beta) signaling pathway. Inhibits host TYK2 and STAT2 phosphorylation, thereby preventing activation of JAK-STAT signaling pathway. The polypeptide is Genome polyprotein (Aedes aegypti (Yellowfever mosquito)).